Reading from the N-terminus, the 248-residue chain is Probable phosphatase VFMJ11_A0091 (248 aa).

Zn(2+)-binding residues include H8, H10, H16, H41, E74, H102, H132, D194, and H196.

The protein belongs to the PHP family. The cofactor is Zn(2+).

This Aliivibrio fischeri (strain MJ11) (Vibrio fischeri) protein is Probable phosphatase VFMJ11_A0091.